The primary structure comprises 123 residues: SGSCTTKTCWTMLPKFRELGYILKEKYNEAVQVEPVRTHRNKRPVFLKIKKPLSYRKPMVTDLVYIEKSPNYCEEDPITGSVGTQGRMCNKTSSQNNSCDLMCCGRGYNTHQYSRVWQCNCKF.

A lipid anchor (O-palmitoleoyl serine; by PORCN) is attached at serine 1. Positions 33 to 61 (VEPVRTHRNKRPVFLKIKKPLSYRKPMVT) are disordered linker. The cysteines at positions 89 and 104 are disulfide-linked. N-linked (GlcNAc...) asparagine glycosylation is found at asparagine 90 and asparagine 96.

The protein belongs to the Wnt family. In terms of assembly, forms a soluble 1:1 complex with AFM; this prevents oligomerization and is required for prolonged biological activity. The complex with AFM may represent the physiological form in body fluids. Interacts with FZD5. Interacts with PORCN. In terms of processing, palmitoleoylation is required for efficient binding to frizzled receptors. Depalmitoleoylation leads to Wnt signaling pathway inhibition.

Its subcellular location is the secreted. The protein localises to the extracellular space. It localises to the extracellular matrix. Functionally, ligand for members of the frizzled family of seven transmembrane receptors that functions in the canonical Wnt/beta-catenin signaling pathway. Plays an important role in embryonic development, including dorsal versus ventral patterning during limb development, skeleton development and urogenital tract development. Required for central nervous system (CNS) angiogenesis and blood-brain barrier regulation. The sequence is that of Protein Wnt-7a (WNT-7A) from Alopias vulpinus (Common thresher shark).